The primary structure comprises 365 residues: Chorismate synthase (365 aa).

Arg-48 and Arg-54 together coordinate NADP(+). FMN contacts are provided by residues 131-133 (RSS), 243-244 (NA), Gly-288, 303-307 (KPTSS), and Arg-329.

It belongs to the chorismate synthase family. As to quaternary structure, homotetramer. FMNH2 serves as cofactor.

The catalysed reaction is 5-O-(1-carboxyvinyl)-3-phosphoshikimate = chorismate + phosphate. The protein operates within metabolic intermediate biosynthesis; chorismate biosynthesis; chorismate from D-erythrose 4-phosphate and phosphoenolpyruvate: step 7/7. Catalyzes the anti-1,4-elimination of the C-3 phosphate and the C-6 proR hydrogen from 5-enolpyruvylshikimate-3-phosphate (EPSP) to yield chorismate, which is the branch point compound that serves as the starting substrate for the three terminal pathways of aromatic amino acid biosynthesis. This reaction introduces a second double bond into the aromatic ring system. This Agrobacterium fabrum (strain C58 / ATCC 33970) (Agrobacterium tumefaciens (strain C58)) protein is Chorismate synthase.